The sequence spans 218 residues: uncharacterized protein (218 aa).

An RING-type zinc finger spans residues 154–199 (CFICTMEYSRTDKNLHPIILNCGHNLCRSCINKLTGNGIVKCPFDR).

This is an uncharacterized protein from Caenorhabditis elegans.